The sequence spans 433 residues: Glutamate-1-semialdehyde 2,1-aminomutase (433 aa).

N6-(pyridoxal phosphate)lysine is present on K271.

The protein belongs to the class-III pyridoxal-phosphate-dependent aminotransferase family. HemL subfamily. Homodimer. The cofactor is pyridoxal 5'-phosphate.

It localises to the cytoplasm. It catalyses the reaction (S)-4-amino-5-oxopentanoate = 5-aminolevulinate. It functions in the pathway porphyrin-containing compound metabolism; protoporphyrin-IX biosynthesis; 5-aminolevulinate from L-glutamyl-tRNA(Glu): step 2/2. Its pathway is porphyrin-containing compound metabolism; chlorophyll biosynthesis. This chain is Glutamate-1-semialdehyde 2,1-aminomutase, found in Prochlorococcus marinus (strain MIT 9215).